Reading from the N-terminus, the 351-residue chain is Peptide chain release factor 1 (351 aa).

At glutamine 233 the chain carries N5-methylglutamine.

This sequence belongs to the prokaryotic/mitochondrial release factor family. Post-translationally, methylated by PrmC. Methylation increases the termination efficiency of RF1.

The protein localises to the cytoplasm. Its function is as follows. Peptide chain release factor 1 directs the termination of translation in response to the peptide chain termination codons UAG and UAA. The chain is Peptide chain release factor 1 (prfA) from Treponema pallidum (strain Nichols).